The following is a 153-amino-acid chain: Ribosome maturation factor RimP (153 aa).

The protein belongs to the RimP family.

It localises to the cytoplasm. In terms of biological role, required for maturation of 30S ribosomal subunits. The protein is Ribosome maturation factor RimP of Marinobacter nauticus (strain ATCC 700491 / DSM 11845 / VT8) (Marinobacter aquaeolei).